Here is a 599-residue protein sequence, read N- to C-terminus: NADH-quinone oxidoreductase subunit C/D (599 aa).

Positions 1-15 (MTDLTAQELAQPSWQ) are enriched in polar residues. The tract at residues 1 to 21 (MTDLTAQELAQPSWQTRDHQD) is disordered. Residues 1–189 (MTDLTAQELA…DPFELTKQKE (189 aa)) are NADH dehydrogenase I subunit C. Positions 213-599 (DFMFLNLGPN…IDFVMSDVDR (387 aa)) are NADH dehydrogenase I subunit D.

This sequence in the N-terminal section; belongs to the complex I 30 kDa subunit family. It in the C-terminal section; belongs to the complex I 49 kDa subunit family. In terms of assembly, NDH-1 is composed of 13 different subunits. Subunits NuoB, CD, E, F, and G constitute the peripheral sector of the complex.

It localises to the cell inner membrane. It carries out the reaction a quinone + NADH + 5 H(+)(in) = a quinol + NAD(+) + 4 H(+)(out). In terms of biological role, NDH-1 shuttles electrons from NADH, via FMN and iron-sulfur (Fe-S) centers, to quinones in the respiratory chain. The immediate electron acceptor for the enzyme in this species is believed to be ubiquinone. Couples the redox reaction to proton translocation (for every two electrons transferred, four hydrogen ions are translocated across the cytoplasmic membrane), and thus conserves the redox energy in a proton gradient. The sequence is that of NADH-quinone oxidoreductase subunit C/D from Erwinia tasmaniensis (strain DSM 17950 / CFBP 7177 / CIP 109463 / NCPPB 4357 / Et1/99).